A 247-amino-acid chain; its full sequence is Small ribosomal subunit protein uS3 (247 aa).

The KH type-2 domain maps to 39 to 107 (VRDYLRKKLD…PAQVNIEEIT (69 aa)). Residues 213-247 (SVYNPPKEDKTRAPKRRGRSNSNRRNSDRANTDRG) are disordered. Over residues 237–247 (RNSDRANTDRG) the composition is skewed to basic and acidic residues.

Belongs to the universal ribosomal protein uS3 family. Part of the 30S ribosomal subunit. Forms a tight complex with proteins S10 and S14.

Functionally, binds the lower part of the 30S subunit head. Binds mRNA in the 70S ribosome, positioning it for translation. This chain is Small ribosomal subunit protein uS3, found in Psychrobacter sp. (strain PRwf-1).